The chain runs to 200 residues: Phospholipase A2 inhibitor LNF2 (200 aa).

A signal peptide spans 1 to 19; it reads MKSLHTICLLFIFVARGNS. Disulfide bonds link Cys22/Cys46, Cys25/Cys32, Cys39/Cys67, Cys73/Cys94, Cys95/Cys100, Cys118/Cys143, Cys136/Cys165, and Cys169/Cys191. An N-linked (GlcNAc...) asparagine glycan is attached at Asn176.

The protein belongs to the CNF-like-inhibitor family. In terms of assembly, occurs as a mixture of oligomers. Tetrameric arrangement appears to be the predominant quaternary structure. As to expression, expressed by the liver.

It localises to the secreted. Functionally, inhibits the enzymatic activity of phospholipase A2 (PA2). The polypeptide is Phospholipase A2 inhibitor LNF2 (Lachesis muta muta (Bushmaster)).